A 370-amino-acid chain; its full sequence is MAPTTPATHDPALSHGAPPTQGSQAPANAAPNLTPADISGMQLNGLDQSQIMNLLRSLPGMFTGAKIPDQGQGNPKEDAAQTLSNLAQASSPFGGQHLPIHYQTGAAGGLPGINDPGPSTHPRGPPNLGQLSAVAMQAAPATIQHQDQQQSGRQEDGEQAGNTSIDSPSAKDGENGTGEFNQTSTSTPSGGRRGGRSATMGSDEWSRQRKDNHKEVERRRRGNINEGINELGRIVPSGSGEKAKGAILSRAVQYIHHLKENEARNIEKWTLEKLLMDQAMGDLQAQLEEIKRLWEEERMARTRLEAELEVLRNMNGVSTAGAGSGAAKDESAAGTKRRSTDGADAAGTNVEGGNNDNAEGERDGKRQRTE.

Disordered stretches follow at residues 1–39 and 102–221; these read MAPTTPATHDPALSHGAPPTQGSQAPANAAPNLTPADIS and YQTG…RRRR. Residues 143-152 are compositionally biased toward polar residues; it reads IQHQDQQQSG. A compositionally biased stretch (low complexity) spans 183–202; sequence TSTSTPSGGRRGGRSATMGS. Residues 204–218 are compositionally biased toward basic and acidic residues; that stretch reads EWSRQRKDNHKEVER. The interval 208–221 is basic motif; it reads QRKDNHKEVERRRR. The 51-residue stretch at 208 to 258 folds into the bHLH domain; it reads QRKDNHKEVERRRRGNINEGINELGRIVPSGSGEKAKGAILSRAVQYIHHL. Residues 222-258 are helix-loop-helix motif; the sequence is GNINEGINELGRIVPSGSGEKAKGAILSRAVQYIHHL. Positions 317–370 are disordered; the sequence is VSTAGAGSGAAKDESAAGTKRRSTDGADAAGTNVEGGNNDNAEGERDGKRQRTE. The span at 359–370 shows a compositional bias: basic and acidic residues; the sequence is EGERDGKRQRTE.

It is found in the nucleus. Transcription factor that may regulate the expression of the gene cluster that mediates the biosynthesis of psilocybin, a psychotropic tryptamine-derived natural product. The protein is Psilocybin cluster transcription regulator of Psilocybe cyanescens.